Here is a 758-residue protein sequence, read N- to C-terminus: 5-methyltetrahydropteroyltriglutamate--homocysteine methyltransferase (758 aa).

5-methyltetrahydropteroyltri-L-glutamate-binding positions include 16-19 and Lys-112; that span reads RELK. L-homocysteine is bound by residues 433–435 and Glu-486; that span reads IGS. L-methionine-binding positions include 433–435 and Glu-486; that span reads IGS. Residues 517–518 and Trp-563 contribute to the 5-methyltetrahydropteroyltri-L-glutamate site; that span reads RC. Asp-601 is an L-homocysteine binding site. Asp-601 is a binding site for L-methionine. Glu-607 is a binding site for 5-methyltetrahydropteroyltri-L-glutamate. Zn(2+) is bound by residues His-643, Cys-645, and Glu-667. Catalysis depends on His-696, which acts as the Proton donor. Residue Cys-728 coordinates Zn(2+).

The protein belongs to the vitamin-B12 independent methionine synthase family. Zn(2+) serves as cofactor.

It catalyses the reaction 5-methyltetrahydropteroyltri-L-glutamate + L-homocysteine = tetrahydropteroyltri-L-glutamate + L-methionine. The protein operates within amino-acid biosynthesis; L-methionine biosynthesis via de novo pathway; L-methionine from L-homocysteine (MetE route): step 1/1. Its function is as follows. Catalyzes the transfer of a methyl group from 5-methyltetrahydrofolate to homocysteine resulting in methionine formation. The sequence is that of 5-methyltetrahydropteroyltriglutamate--homocysteine methyltransferase from Neisseria meningitidis serogroup C / serotype 2a (strain ATCC 700532 / DSM 15464 / FAM18).